The primary structure comprises 63 residues: DNA-directed RNA polymerase 7 kDa subunit (63 aa).

It belongs to the poxviridae DNA-directed RNA polymerase 7 kDa subunit family. As to quaternary structure, the DNA-dependent RNA polymerase used for intermediate and late genes expression consists of eight subunits 147 kDa, 133 kDa, 35 kDa, 30 kDa, 22 kDa, 19 kDa, 18 kDa and 7 kDa totalling more than 500 kDa in mass. The same holoenzyme, with the addition of the transcription-specificity factor RAP94, is used for early gene expression.

The protein localises to the virion. It carries out the reaction RNA(n) + a ribonucleoside 5'-triphosphate = RNA(n+1) + diphosphate. Part of the DNA-dependent RNA polymerase which catalyzes the transcription of viral DNA into RNA using the four ribonucleoside triphosphates as substrates. Responsible for the transcription of early, intermediate and late genes. DNA-dependent RNA polymerase associates with the early transcription factor (ETF) thereby allowing the early genes transcription. Late transcription, and probably also intermediate transcription, require newly synthesized RNA polymerase. The sequence is that of DNA-directed RNA polymerase 7 kDa subunit (RPO7) from Homo sapiens (Human).